A 425-amino-acid polypeptide reads, in one-letter code: UPF0761 membrane protein XCV0968 (425 aa).

The next 6 membrane-spanning stretches (helical) occupy residues Val-48–Phe-68, Phe-105–Glu-125, Gly-154–Phe-174, Leu-182–Ile-202, Ala-216–Phe-236, and Ala-250–Leu-270.

It belongs to the UPF0761 family.

It is found in the cell inner membrane. The polypeptide is UPF0761 membrane protein XCV0968 (Xanthomonas euvesicatoria pv. vesicatoria (strain 85-10) (Xanthomonas campestris pv. vesicatoria)).